A 134-amino-acid polypeptide reads, in one-letter code: MAVKKTKSKQKVKRKNIVSGVAHIHSTHQNTIVAFSDEAGNVFAWSSAGAIGYKGTKKKTPYAAGLATTAAVEKAKEHGLKEVRVELKGTGSGKDAARKQIEALGIIIKEVKDVTPIPHNGTRPPKKVLKRDLK.

The interval 115-134 (TPIPHNGTRPPKKVLKRDLK) is disordered. Residues 124 to 134 (PPKKVLKRDLK) are compositionally biased toward basic residues.

Belongs to the universal ribosomal protein uS11 family. As to quaternary structure, part of the 30S ribosomal subunit. Interacts with proteins S7 and S18. Binds to IF-3.

In terms of biological role, located on the platform of the 30S subunit, it bridges several disparate RNA helices of the 16S rRNA. Forms part of the Shine-Dalgarno cleft in the 70S ribosome. The protein is Small ribosomal subunit protein uS11 of Mycoplasma mobile (strain ATCC 43663 / 163K / NCTC 11711) (Mesomycoplasma mobile).